Consider the following 872-residue polypeptide: MDSRYNPAILEEKWQKTWVELGLDKTQTQSNKPKFYALSMFPYPSGSLHMGHVRNYTITDVIARLKRMQGYRVLHPMGWDAFGLPAENAAIDRGVPPANWTYQNITQMRQQLQRLGLSIDWDSEVATCSPDYYKWTQWIFLQFLQAGLAYQKEAAVNWDPIDQTVLANEQVDNEGRSWRSGAIVERKLLRQWFLKITDYAEELLNDLDKLTGWPERVKLMQANWIGKSVGAYLEFPIVGSTEKIAVYTTRPDTVYGVSYVVLAPEHPLTKQVTSKTQQAVVDTFIQEVTNQSELERTAEDKPKRGVATGGKAINPFTGEEVPIWIADYVLYEYGTGAVMGVPAHDVRDFKFAQRYDLPIDFVIAAPDDVAGFDLSPTSETEEVTQVVQIEYNQAYTEPGILINSGAFTGMTSTDAKQAIVKYATEKGFGKERIQYRLRDWLISRQRYWGAPIPVIHCPNCGIVPVPDKDLPVILPEEVEFTGRGGSPLAQLESWVNVPCPTCGSPAKRETDTMDTFIDSSWYFLRFTDARNEAQVFESAKTNDWMPVDQYVGGIEHAILHLLYSRFFTKVLRDRGLLNFDEPFERLLTQGMVQGLTYFNPNKGGKDKWVPSHLVNPNDPRDPQTGEPLQRLYATMSKSKGNGVAPEDVIAKYGVDTARMFILFKAPPEKDLEWDEADVEGQFRFLNRVWRLVTDYVASGVNPKNKSGELSKSEKDLRRAIHSAIQSVTEDLEDEYQFNTAISELMKLSNALTDANGKDSRVYAEGIHTLVVLLAPFAPHIAEELWQLLGNSESVHTQTWPAFDPAALVADEITLVIQVNGKKRADIQVPSQADKAELEKYARESEVVQRHLEGKEIKKVIVVPGKLVNFVVG.

Residues 42–52 (PYPSGSLHMGH) carry the 'HIGH' region motif. The 'KMSKS' region signature appears at 634–638 (TMSKS). ATP is bound at residue lysine 637.

The protein belongs to the class-I aminoacyl-tRNA synthetase family.

The protein resides in the cytoplasm. It catalyses the reaction tRNA(Leu) + L-leucine + ATP = L-leucyl-tRNA(Leu) + AMP + diphosphate. This is Leucine--tRNA ligase from Trichormus variabilis (strain ATCC 29413 / PCC 7937) (Anabaena variabilis).